A 729-amino-acid polypeptide reads, in one-letter code: Transketolase (729 aa).

His-97 provides a ligand contact to substrate. Residues His-138 and 186-188 (GPL) each bind thiamine diphosphate. Asp-227 contributes to the Mg(2+) binding site. 2 residues coordinate thiamine diphosphate: Gly-228 and Asn-257. Mg(2+)-binding residues include Asn-257 and Ile-259. Residues His-332, Arg-423, and Ser-450 each coordinate substrate. His-332 provides a ligand contact to thiamine diphosphate. Catalysis depends on Glu-477, which acts as the Proton donor. A thiamine diphosphate-binding site is contributed by Phe-503. His-527, Asp-535, and Arg-586 together coordinate substrate.

This sequence belongs to the transketolase family. Homodimer. Requires Mg(2+) as cofactor. It depends on Ca(2+) as a cofactor. Mn(2+) is required as a cofactor. Co(2+) serves as cofactor. The cofactor is thiamine diphosphate.

It carries out the reaction D-sedoheptulose 7-phosphate + D-glyceraldehyde 3-phosphate = aldehydo-D-ribose 5-phosphate + D-xylulose 5-phosphate. In terms of biological role, catalyzes the transfer of a two-carbon ketol group from a ketose donor to an aldose acceptor, via a covalent intermediate with the cofactor thiamine pyrophosphate. This is Transketolase (tkt) from Streptococcus pyogenes serotype M18 (strain MGAS8232).